The chain runs to 406 residues: Argininosuccinate synthase (406 aa).

ATP-binding positions include 12 to 20 (AYSGGLDTS) and Ala-39. Positions 90 and 95 each coordinate L-citrulline. Residue Gly-120 coordinates ATP. 3 residues coordinate L-aspartate: Thr-122, Asn-126, and Asp-127. Asn-126 contacts L-citrulline. 5 residues coordinate L-citrulline: Arg-130, Ser-179, Ser-188, Glu-264, and Tyr-276.

This sequence belongs to the argininosuccinate synthase family. Type 1 subfamily. As to quaternary structure, homotetramer.

Its subcellular location is the cytoplasm. It carries out the reaction L-citrulline + L-aspartate + ATP = 2-(N(omega)-L-arginino)succinate + AMP + diphosphate + H(+). It participates in amino-acid biosynthesis; L-arginine biosynthesis; L-arginine from L-ornithine and carbamoyl phosphate: step 2/3. This chain is Argininosuccinate synthase, found in Geobacter sp. (strain M21).